A 511-amino-acid chain; its full sequence is GMP synthase [glutamine-hydrolyzing] (511 aa).

Positions 5–195 (DILVLDFGSQ…AKYACNCESI (191 aa)) constitute a Glutamine amidotransferase type-1 domain. Cysteine 82 acts as the Nucleophile in catalysis. Residues histidine 169 and glutamate 171 contribute to the active site. One can recognise a GMPS ATP-PPase domain in the interval 196-386 (WNMGSFAKTQ…LGLSKEVVYR (191 aa)). 223 to 229 (SGGVDSS) contacts ATP.

Homodimer.

It catalyses the reaction XMP + L-glutamine + ATP + H2O = GMP + L-glutamate + AMP + diphosphate + 2 H(+). Its pathway is purine metabolism; GMP biosynthesis; GMP from XMP (L-Gln route): step 1/1. Its function is as follows. Catalyzes the synthesis of GMP from XMP. This chain is GMP synthase [glutamine-hydrolyzing] (guaA), found in Campylobacter jejuni subsp. jejuni serotype O:2 (strain ATCC 700819 / NCTC 11168).